The sequence spans 519 residues: Aldehyde dehydrogenase X, mitochondrial (519 aa).

The transit peptide at 1-19 (MLTARLLLPRLLCLQGRTT) directs the protein to the mitochondrion. The residue at position 53 (K53) is an N6-acetyllysine. K54 carries the N6-acetyllysine; alternate modification. An N6-succinyllysine; alternate modification is found at K54. An N6-succinyllysine modification is found at K83. 264-269 (GSTEVG) is a binding site for NAD(+). E287 serves as the catalytic Proton acceptor. Residue C321 is the Nucleophile of the active site. K366, K385, K401, K416, and K428 each carry N6-acetyllysine; alternate. N6-succinyllysine; alternate is present on residues K366, K385, K401, K416, and K428. K431 is modified (N6-acetyllysine).

The protein belongs to the aldehyde dehydrogenase family. As to quaternary structure, homotetramer.

The protein resides in the mitochondrion matrix. The enzyme catalyses an aldehyde + NAD(+) + H2O = a carboxylate + NADH + 2 H(+). Its pathway is alcohol metabolism; ethanol degradation; acetate from ethanol: step 2/2. ALDHs play a major role in the detoxification of alcohol-derived acetaldehyde. They are involved in the metabolism of corticosteroids, biogenic amines, neurotransmitters, and lipid peroxidation. The polypeptide is Aldehyde dehydrogenase X, mitochondrial (Aldh1b1) (Mus musculus (Mouse)).